We begin with the raw amino-acid sequence, 260 residues long: Phosphate import ATP-binding protein PstB (260 aa).

The region spanning 14–255 (VQVKNLAFYY…PRNKQTEDYI (242 aa)) is the ABC transporter domain. Position 46–53 (46–53 (GPSGCGKS)) interacts with ATP.

Belongs to the ABC transporter superfamily. Phosphate importer (TC 3.A.1.7) family. As to quaternary structure, the complex is composed of two ATP-binding proteins (PstB), two transmembrane proteins (PstC and PstA) and a solute-binding protein (PstS).

Its subcellular location is the cell inner membrane. The catalysed reaction is phosphate(out) + ATP + H2O = ADP + 2 phosphate(in) + H(+). Its function is as follows. Part of the ABC transporter complex PstSACB involved in phosphate import. Responsible for energy coupling to the transport system. The chain is Phosphate import ATP-binding protein PstB from Syntrophotalea carbinolica (strain DSM 2380 / NBRC 103641 / GraBd1) (Pelobacter carbinolicus).